The chain runs to 419 residues: Acetyl transferase GW6a (419 aa).

In terms of domain architecture, N-acetyltransferase spans Val12–Pro210. Positions Val44–Lys68 are disordered. Positions Glu58–Lys68 are enriched in basic residues.

It belongs to the acetyltransferase family. As to quaternary structure, interacts (via C-terminus) with HDR3 (via N-terminus). Post-translationally, ubiquitinated at Lys-63 by HDR3. Polyubiquitination of GW6A delays its degradation by the 26S proteasome and enhances GW6A histone acetyltransferase activity. In terms of tissue distribution, expressed in roots, leaf blades, leaf sheaths, shoot apical meristem and young panicles.

The protein resides in the nucleus. Functionally, possesses intrinsic histone acetyltransferase activity and acts as a positive regulator of grain weight, hull size, yield, and plant biomass. Regulates postitively grain weight and yield by enlarging spikelet hulls via increasing cell number and accelerating grain filling. In vitro, catalyzes the acetylation of histone H4 at Lys-6 (H4K5ac), Lys-13 (H4K12ac) and Lys-17 (H4K16ac). Involved in the regulation of plastochron (the time interval between leaf initiation event). In Oryza sativa subsp. japonica (Rice), this protein is Acetyl transferase GW6a.